We begin with the raw amino-acid sequence, 307 residues long: MEKEVDKKFVWVIKDLNVFYPKQSHSDPFLIAGSRWRLLALPKGTNYEFFYQYMGVADSCQSLTSSWRRHVKLRLTIVNGISHKRSIVTDSDLYFDENLPACSYPTVPPPFNLLARDAGFLICREITIVIEVVSLEVIGTSNNDGANSIDLLKQTQQIIDVNGFQVLPSQVESVKRIFEIYPNIASEVPSMKPCLKTLYMNVLLGIIETLCQLPAELSDTDLDEASIAVLFVSQGGFKVDWLEKKLKEVKEKKKNVDNGKARLQQIEEDLQKLNQKRLDLKDILDKEKANDLTANVPLSFNDVLKMF.

The MATH domain occupies 6–132; that stretch reads DKKFVWVIKD…CREITIVIEV (127 aa). Positions 238 to 290 form a coiled coil; it reads KVDWLEKKLKEVKEKKKNVDNGKARLQQIEEDLQKLNQKRLDLKDILDKEKAN.

The protein is MATH domain and coiled-coil domain-containing protein At3g58380 of Arabidopsis thaliana (Mouse-ear cress).